A 1014-amino-acid chain; its full sequence is Ephrin type-B receptor 6 (1014 aa).

The N-terminal stretch at 1–32 (MATEGTTGSGSRVVAGMVCSLWLLVLGSSVLA) is a signal peptide. Over 33-591 (LEEVLLDTTG…LPEKLSLVIG (559 aa)) the chain is Extracellular. In terms of domain architecture, Eph LBD spans 34–232 (EEVLLDTTGE…FSYTCPSVLR (199 aa)). Fibronectin type-III domains follow at residues 364–479 (PPSA…TSHE) and 480–575 (VPSA…TLPQ). N473 carries an N-linked (GlcNAc...) asparagine glycan. Residues 592–612 (SILGALAFLLLAAITVLAVIF) traverse the membrane as a helical segment. Residues 613-1014 (QRKRRGTGYT…HLRQPGSVEV (402 aa)) lie on the Cytoplasmic side of the membrane. Residues 663-912 (IKIEEVIGAG…QLVAAFDKMI (250 aa)) form the Protein kinase domain. 669-677 (IGAGSFGEV) lines the ATP pocket. Residues 941 to 1005 (PCLDSPQAWL…LHNIQLLQQH (65 aa)) enclose the SAM domain. The PDZ-binding motif lies at 1012-1014 (VEV).

It belongs to the protein kinase superfamily. Tyr protein kinase family. Ephrin receptor subfamily. As to quaternary structure, interacts with CBL and EPHB1. Interacts with FYN; this interaction takes place in a ligand-independent manner. Post-translationally, ligand-binding increases phosphorylation on tyrosine residues. Phosphorylation on tyrosine residues is mediated by transphosphorylation by the catalytically active EPHB1 in a ligand-independent manner. Tyrosine phosphorylation of the receptor may act as a switch on the functional transition from cell adhesion/attraction to de-adhesion/repulsion. High level in thymus, and brain. Very low levels of expression in kidney, lung, liver, bone marrow, skeletal muscle, spleen from 2 week old and adult mice, heart, testes and embryonic stem cells.

The protein localises to the cell membrane. It is found in the secreted. Its function is as follows. Kinase-defective receptor for members of the ephrin-B family. Binds to ephrin-B1 and ephrin-B2. Modulates cell adhesion and migration by exerting both positive and negative effects upon stimulation with ephrin-B2. Inhibits JNK activation, T-cell receptor-induced IL-2 secretion and CD25 expression upon stimulation with ephrin-B2. The polypeptide is Ephrin type-B receptor 6 (Ephb6) (Mus musculus (Mouse)).